A 180-amino-acid chain; its full sequence is UPF0227 protein YcfP (180 aa).

The protein belongs to the UPF0227 family.

The sequence is that of UPF0227 protein YcfP from Escherichia coli O7:K1 (strain IAI39 / ExPEC).